A 132-amino-acid polypeptide reads, in one-letter code: Large ribosomal subunit protein bL19 (132 aa).

The protein belongs to the bacterial ribosomal protein bL19 family.

Its function is as follows. This protein is located at the 30S-50S ribosomal subunit interface and may play a role in the structure and function of the aminoacyl-tRNA binding site. The chain is Large ribosomal subunit protein bL19 from Nitrosomonas europaea (strain ATCC 19718 / CIP 103999 / KCTC 2705 / NBRC 14298).